The following is a 399-amino-acid chain: Phosphoglycerate kinase (399 aa).

Substrate-binding positions include 22 to 24 (DLN), R37, 60 to 63 (HFGR), R119, and R152. ATP is bound by residues K202, E324, and 354–357 (GGDT).

Belongs to the phosphoglycerate kinase family. As to quaternary structure, monomer.

It localises to the cytoplasm. The catalysed reaction is (2R)-3-phosphoglycerate + ATP = (2R)-3-phospho-glyceroyl phosphate + ADP. Its pathway is carbohydrate degradation; glycolysis; pyruvate from D-glyceraldehyde 3-phosphate: step 2/5. The chain is Phosphoglycerate kinase from Rhizobium meliloti (strain 1021) (Ensifer meliloti).